Reading from the N-terminus, the 134-residue chain is 6,7-dimethyl-8-ribityllumazine synthase (134 aa).

5-amino-6-(D-ribitylamino)uracil-binding positions include phenylalanine 12, 44–46 (VFD), and 68–70 (SVI). Position 73–74 (73–74 (ET)) interacts with (2S)-2-hydroxy-3-oxobutyl phosphate. Histidine 76 acts as the Proton donor in catalysis. Residue leucine 101 participates in 5-amino-6-(D-ribitylamino)uracil binding. Arginine 116 contributes to the (2S)-2-hydroxy-3-oxobutyl phosphate binding site.

The protein belongs to the DMRL synthase family.

It carries out the reaction (2S)-2-hydroxy-3-oxobutyl phosphate + 5-amino-6-(D-ribitylamino)uracil = 6,7-dimethyl-8-(1-D-ribityl)lumazine + phosphate + 2 H2O + H(+). Its pathway is cofactor biosynthesis; riboflavin biosynthesis; riboflavin from 2-hydroxy-3-oxobutyl phosphate and 5-amino-6-(D-ribitylamino)uracil: step 1/2. In terms of biological role, catalyzes the formation of 6,7-dimethyl-8-ribityllumazine by condensation of 5-amino-6-(D-ribitylamino)uracil with 3,4-dihydroxy-2-butanone 4-phosphate. This is the penultimate step in the biosynthesis of riboflavin. This Methanosarcina acetivorans (strain ATCC 35395 / DSM 2834 / JCM 12185 / C2A) protein is 6,7-dimethyl-8-ribityllumazine synthase.